We begin with the raw amino-acid sequence, 170 residues long: CFA/I fimbrial subunit B (170 aa).

An N-terminal signal peptide occupies residues 1–23 (MKFKKTIGAMALTTMFVAVSASA).

This sequence belongs to the fimbrial CS1 protein family. CFA/I fimbriae are rather rigid, thread-like filaments of 0.5-1 micrometer, with an apparent axial hole, and a diameter of 7 nanometers. A single CFA/I fimbria consists of about 100 identical protein subunits.

Its subcellular location is the fimbrium. In terms of biological role, fimbriae (also called pili), polar filaments radiating from the surface of the bacterium to a length of 0.5-1.5 micrometers and numbering 100-300 per cell, enable bacteria to colonize the epithelium of specific host organs. In Escherichia coli, this protein is CFA/I fimbrial subunit B (cfaB).